The sequence spans 565 residues: Formate--tetrahydrofolate ligase (565 aa).

73 to 80 (TPAGEGKS) provides a ligand contact to ATP.

This sequence belongs to the formate--tetrahydrofolate ligase family.

The catalysed reaction is (6S)-5,6,7,8-tetrahydrofolate + formate + ATP = (6R)-10-formyltetrahydrofolate + ADP + phosphate. It functions in the pathway one-carbon metabolism; tetrahydrofolate interconversion. The sequence is that of Formate--tetrahydrofolate ligase from Arthrobacter sp. (strain FB24).